The chain runs to 96 residues: Cytochrome c oxidase assembly factor 3 homolog, mitochondrial (96 aa).

Residues 1–50 (MSSQGEPKPEAQFAKRIDPTKEALTKEQLQFIRQVEMAQWKKKTDKLRGR) lie on the Mitochondrial matrix side of the membrane. A helical transmembrane segment spans residues 51–73 (NVATGLAIGAVVLGIYGYTFYSV). The Mitochondrial intermembrane portion of the chain corresponds to 74-96 (SQEKIMDEIDEEAKVRVPKTGAN).

The protein belongs to the COA3 family. In terms of assembly, core component of the MITRAC (mitochondrial translation regulation assembly intermediate of cytochrome c oxidase complex) complex.

It localises to the mitochondrion inner membrane. In terms of biological role, core component of the MITRAC (mitochondrial translation regulation assembly intermediate of cytochrome c oxidase complex) complex, that regulates cytochrome c oxidase assembly. MITRAC complexes regulate both translation of mitochondrial encoded components and assembly of nuclear-encoded components imported in mitochondrion. Required for efficient translation of MT-CO1 and mitochondrial respiratory chain complex IV assembly. In Danio rerio (Zebrafish), this protein is Cytochrome c oxidase assembly factor 3 homolog, mitochondrial (coa3a).